Reading from the N-terminus, the 483-residue chain is NADH-quinone oxidoreductase subunit N (483 aa).

A run of 13 helical transmembrane segments spans residues 13–33 (PALP…YGVF), 45–65 (GALA…NAYV), 80–100 (FMKL…LTFI), 111–131 (PVLI…NGLI), 165–185 (FVLG…IYGF), 205–225 (IGVI…ISAV), 244–264 (AFFA…VLFV), 276–296 (IIVF…IGQS), 301–321 (LMAY…AAGT), 328–348 (VLIY…CILA), 373–393 (AFMM…AGFF), 407–429 (LYPL…LRIV), and 452–472 (VLGI…PLIL).

Belongs to the complex I subunit 2 family. NDH-1 is composed of 14 different subunits. Subunits NuoA, H, J, K, L, M, N constitute the membrane sector of the complex.

The protein resides in the cell inner membrane. It catalyses the reaction a quinone + NADH + 5 H(+)(in) = a quinol + NAD(+) + 4 H(+)(out). Its function is as follows. NDH-1 shuttles electrons from NADH, via FMN and iron-sulfur (Fe-S) centers, to quinones in the respiratory chain. The immediate electron acceptor for the enzyme in this species is believed to be ubiquinone. Couples the redox reaction to proton translocation (for every two electrons transferred, four hydrogen ions are translocated across the cytoplasmic membrane), and thus conserves the redox energy in a proton gradient. This Parvibaculum lavamentivorans (strain DS-1 / DSM 13023 / NCIMB 13966) protein is NADH-quinone oxidoreductase subunit N.